The following is a 170-amino-acid chain: ATP synthase subunit b (170 aa).

Residues 11–31 (AFTFGDAFFTLFAFAILLVLI) form a helical membrane-spanning segment.

Belongs to the ATPase B chain family. F-type ATPases have 2 components, F(1) - the catalytic core - and F(0) - the membrane proton channel. F(1) has five subunits: alpha(3), beta(3), gamma(1), delta(1), epsilon(1). F(0) has three main subunits: a(1), b(2) and c(10-14). The alpha and beta chains form an alternating ring which encloses part of the gamma chain. F(1) is attached to F(0) by a central stalk formed by the gamma and epsilon chains, while a peripheral stalk is formed by the delta and b chains.

It is found in the cell membrane. Its function is as follows. F(1)F(0) ATP synthase produces ATP from ADP in the presence of a proton or sodium gradient. F-type ATPases consist of two structural domains, F(1) containing the extramembraneous catalytic core and F(0) containing the membrane proton channel, linked together by a central stalk and a peripheral stalk. During catalysis, ATP synthesis in the catalytic domain of F(1) is coupled via a rotary mechanism of the central stalk subunits to proton translocation. Functionally, component of the F(0) channel, it forms part of the peripheral stalk, linking F(1) to F(0). The polypeptide is ATP synthase subunit b (Listeria welshimeri serovar 6b (strain ATCC 35897 / DSM 20650 / CCUG 15529 / CIP 8149 / NCTC 11857 / SLCC 5334 / V8)).